We begin with the raw amino-acid sequence, 92 residues long: Alpha-conotoxin VxXXA (92 aa).

An N-terminal signal peptide occupies residues 1-24 (MPKLEMMLLVLLIFPLSYFIAAGG). The propeptide occupies 25–45 (QVVQVDRRGDGLAGYLQRGDR). 4-hydroxyproline; partial occurs at positions 55, 70, and 74. Intrachain disulfides connect Cys-63/Cys-72, Cys-68/Cys-80, Cys-73/Cys-90, and Cys-78/Cys-92.

The protein belongs to the conotoxin D superfamily. As to quaternary structure, homodimer or pseudo-homodimer. Three dimers exist: homodimer of VxXXA, pseudo-homodimer of both VxXXA and [hydroxyPro-74]VxXXA and homodimer of [hydroxyPro-74]VxXXA. These three components exist in a 1:2:1 ratio. VxXXA stands for the form with the Pro-55 hydroxylated. A second major form has both Pro-55 and Pro-74 hydroxylated. The two major forms VxXXA and [hydroxyPro-74]VxXXA exist in a 1:1 ratio. In terms of processing, minor forms are [hydroxyPro-70,hydroxyPro-74]VxXXA and [Pro-55]VxXXA. Expressed by the venom duct.

The protein localises to the secreted. Functionally, alpha-conotoxins act on postsynaptic membranes, they bind to the nicotinic acetylcholine receptors (nAChR) and thus inhibit them. Through its two C-terminal domains, this homodimeric protein would bind to two nAChR allosteric sites, located outside the nAChR C-loop of the principal binding face and at the adjacent binding interface in a clockwise direction. This toxin specifically blocks mammalian neuronal nAChR of the alpha-7/CHRNA7, alpha-3-beta-2/CHRNA3-CHRNB2 (IC(50)=370 nM) and alpha-4-beta-2/CHRNA4-CHRNB2 subtypes. VxXXB inhibits alpha-7/CHRNA7 and alpha-3-beta-2/CHRNA3-CHRNB2 nAChR subtypes with the highest efficiency, followed by VxXXA and VxXXC. VxXXB and VxXXC inhibit the alpha-4-beta-2/CHRNA4-CHRNB2 nAChR subtype more efficiently than VxXXA. The protein is Alpha-conotoxin VxXXA of Conus vexillum (Flag cone).